A 415-amino-acid chain; its full sequence is Squalene synthase 11 (415 aa).

2 helical membrane passes run 281-301 (AIFR…ALCF) and 392-412 (LIII…SNLP).

The protein belongs to the phytoene/squalene synthase family. Mg(2+) serves as cofactor. The cofactor is Mn(2+).

It is found in the endoplasmic reticulum membrane. The catalysed reaction is 2 (2E,6E)-farnesyl diphosphate + NADH + H(+) = squalene + 2 diphosphate + NAD(+). The enzyme catalyses 2 (2E,6E)-farnesyl diphosphate + NADPH + H(+) = squalene + 2 diphosphate + NADP(+). It participates in terpene metabolism; lanosterol biosynthesis; lanosterol from farnesyl diphosphate: step 1/3. Component of the triterpene saponins (e.g. ginsenosides or panaxosides) and phytosterols biosynthetic pathways. Catalyzes the biosynthesis of squalene. The protein is Squalene synthase 11 of Panax ginseng (Korean ginseng).